A 144-amino-acid chain; its full sequence is Large ribosomal subunit protein uL15 (144 aa).

A disordered region spans residues 1 to 52; it reads MRLNTISSAPGAKQAEKRVGRGIGSGWGKTCGRGHKGQKSRSGGFHKVGFEG. Residues 21 to 31 are compositionally biased toward gly residues; that stretch reads RGIGSGWGKTC.

The protein belongs to the universal ribosomal protein uL15 family. Part of the 50S ribosomal subunit.

In terms of biological role, binds to the 23S rRNA. The polypeptide is Large ribosomal subunit protein uL15 (Nitrosococcus oceani (strain ATCC 19707 / BCRC 17464 / JCM 30415 / NCIMB 11848 / C-107)).